We begin with the raw amino-acid sequence, 116 residues long: Large ribosomal subunit protein bL17 (116 aa).

Belongs to the bacterial ribosomal protein bL17 family. As to quaternary structure, part of the 50S ribosomal subunit. Contacts protein L32.

This Prochlorococcus marinus (strain MIT 9215) protein is Large ribosomal subunit protein bL17.